The following is a 657-amino-acid chain: MGILDTIRNPQDLNDLSEEQLEQLASEIREFLITNVSQTGGHLGPNLGVVELTLAVHRIFDSPRDSIVFDTGHQSYVHKLLTGRQDFSTLRQQGGLSGYPSRAESEHDIVESSHASSSLSWADGISRARQLTGEGDRHVVAVVGDGALTGGMAWEAINNIAADKKRRVVIVVNDNGRSYAPTVGGFADYLASLRPTIDSFRAAPAYEVALDWWKKKLQNGGPAGQFTYKSLHAMKKGVKDWWAPQGMFEDLGMKYIGPVDGHNLQALEHALATARNYHGPVIVHAMTEKGHGYAPARAHEADQFHAVGIIDPETGEPTGTAGAKSWTSVFADEIAAIADERKDVVGITGAMLIPVGLHKFAAKHPDRVIDVGIAEQHALTSAAGMAFGGLHPVVAVYATFLNRAFDQLLMDVALHKAGVTIVLDRAGVTGPDGASHHGMWDMSMVQIVPGLHLAAPRDASRLREELREAVAINDAPTVVRFSKGSVGAEIEALERLSDGVDVLARRPAGSTANDVLIVSVGAMSELALDVANRLGAQGISTTVVDPRWVLPVRRSIVALASHHRLVICIEDGVRAGGVGSRIRQEMRAAGVDTALNEVGLPVEFLDHGTRSEVLERVGLTAQQITHDVVAQVLGTKVPFARPLPGQQHPTTGSLPIL.

Thiamine diphosphate-binding positions include His-73 and 113–115 (SHA). Mg(2+) is bound at residue Asp-145. Residues 146–147 (GA), Asn-175, Tyr-293, and Glu-375 each bind thiamine diphosphate. Mg(2+) is bound at residue Asn-175.

The protein belongs to the transketolase family. DXPS subfamily. As to quaternary structure, homodimer. Mg(2+) serves as cofactor. The cofactor is thiamine diphosphate.

It carries out the reaction D-glyceraldehyde 3-phosphate + pyruvate + H(+) = 1-deoxy-D-xylulose 5-phosphate + CO2. It functions in the pathway metabolic intermediate biosynthesis; 1-deoxy-D-xylulose 5-phosphate biosynthesis; 1-deoxy-D-xylulose 5-phosphate from D-glyceraldehyde 3-phosphate and pyruvate: step 1/1. Functionally, catalyzes the acyloin condensation reaction between C atoms 2 and 3 of pyruvate and glyceraldehyde 3-phosphate to yield 1-deoxy-D-xylulose-5-phosphate (DXP). This is 1-deoxy-D-xylulose-5-phosphate synthase from Pseudarthrobacter chlorophenolicus (strain ATCC 700700 / DSM 12829 / CIP 107037 / JCM 12360 / KCTC 9906 / NCIMB 13794 / A6) (Arthrobacter chlorophenolicus).